A 645-amino-acid chain; its full sequence is Threonine--tRNA ligase (645 aa).

Residues 1–63 enclose the TGS domain; the sequence is MDQIKIKFPD…ESDGDIEIVT (63 aa). A catalytic region spans residues 242–540; that stretch reads DHRKIGKELE…LTEETKGAFP (299 aa). Zn(2+)-binding residues include C336, H387, and H517.

Belongs to the class-II aminoacyl-tRNA synthetase family. In terms of assembly, homodimer. Requires Zn(2+) as cofactor.

It is found in the cytoplasm. It carries out the reaction tRNA(Thr) + L-threonine + ATP = L-threonyl-tRNA(Thr) + AMP + diphosphate + H(+). Catalyzes the attachment of threonine to tRNA(Thr) in a two-step reaction: L-threonine is first activated by ATP to form Thr-AMP and then transferred to the acceptor end of tRNA(Thr). Also edits incorrectly charged L-seryl-tRNA(Thr). The sequence is that of Threonine--tRNA ligase from Staphylococcus saprophyticus subsp. saprophyticus (strain ATCC 15305 / DSM 20229 / NCIMB 8711 / NCTC 7292 / S-41).